A 475-amino-acid chain; its full sequence is Methionine aminopeptidase 2-1 (475 aa).

The segment covering M1–T12 has biased composition (basic and acidic residues). The disordered stretch occupies residues M1–L97. Residues N44–E57 are compositionally biased toward acidic residues. Over residues K70 to K83 the composition is skewed to basic residues. H211 contacts substrate. A divalent metal cation is bound by residues D232, D243, and H312. H320 serves as a coordination point for substrate. The a divalent metal cation site is built by E345 and E456.

This sequence belongs to the peptidase M24A family. Methionine aminopeptidase eukaryotic type 2 subfamily. Co(2+) is required as a cofactor. Zn(2+) serves as cofactor. Requires Mn(2+) as cofactor. It depends on Fe(2+) as a cofactor.

The protein resides in the cytoplasm. It carries out the reaction Release of N-terminal amino acids, preferentially methionine, from peptides and arylamides.. Cotranslationally removes the N-terminal methionine from nascent proteins. The N-terminal methionine is often cleaved when the second residue in the primary sequence is small and uncharged (Met-Ala-, Cys, Gly, Pro, Ser, Thr, or Val). The protein is Methionine aminopeptidase 2-1 of Aspergillus niger (strain ATCC MYA-4892 / CBS 513.88 / FGSC A1513).